A 117-amino-acid polypeptide reads, in one-letter code: Ig lambda-1 chain V region (117 aa).

The N-terminal stretch at 1–20 is a signal peptide; that stretch reads MAWISLILSLLALSSGGAIS. Q21 is subject to Pyrrolidone carboxylic acid. The Ig-like domain occupies 21–117; sequence QAVVTQESAL…YFCALWYSNH (97 aa).

The sequence is that of Ig lambda-1 chain V region from Mus musculus (Mouse).